The sequence spans 833 residues: Serine-rich coiled-coil domain-containing protein 2 (833 aa).

Residues 178-208 form a disordered region; sequence NRSSGNVQKPRVNSCASRSSSGESLAQSPDN. Residues 191–208 show a composition bias toward polar residues; sequence SCASRSSSGESLAQSPDN. Residue S222 is modified to Phosphoserine. Disordered stretches follow at residues 321 to 345, 424 to 452, 478 to 508, and 602 to 631; these read LLKS…PADM, NRTR…FDSP, KHTS…SSDG, and DHYH…ESPL. Position 451 is a phosphoserine (S451). A compositionally biased stretch (low complexity) spans 496–506; sequence SSFELSPSDSS. Basic residues predominate over residues 606–615; it reads LSHPGHYHHH. Residues 711-747 adopt a coiled-coil conformation; it reads DQIYKNEDLLNEITQLKEEIKKKDEKIQLLEQQLATR. Positions 789–833 are disordered; the sequence is FQGMPRTVPPHRRQTSSTTAFQQPSQIYRPRPGKTNKATTYRGPQ. Residues 803 to 814 show a composition bias toward polar residues; sequence TSSTTAFQQPSQ.

The protein belongs to the CCSER family. Expressed in brain (at protein level).

The protein localises to the cytoplasm. It is found in the cytoskeleton. Its function is as follows. Microtubule-binding protein which might play a role in microtubule bundling. The sequence is that of Serine-rich coiled-coil domain-containing protein 2 (Ccser2) from Mus musculus (Mouse).